The sequence spans 255 residues: Alkaline ceramidase (255 aa).

The Lumenal portion of the chain corresponds to 1–28; sequence MADGISSFWGPVTSTIECCEMNYAYSSY. The helical transmembrane segment at 29–49 threads the bilayer; that stretch reads IAEFYNTISNVPGILLALIGL. Over 50–60 the chain is Cytoplasmic; it reads VNALRQRFEKR. A helical membrane pass occupies residues 61-81; the sequence is FSILHISNMILAIGSMLYHAT. Histidine 79 is a Zn(2+) binding site. The Lumenal segment spans residues 82–91; the sequence is LQHVQQQSDE. A helical membrane pass occupies residues 92 to 112; it reads TPMVWEILLYMYILYSPDWHY. Residues 113–118 lie on the Cytoplasmic side of the membrane; the sequence is RSTMPT. The next 2 membrane-spanning stretches (helical) occupy residues 119 to 139 and 140 to 160; these read FLFL…FGIG and FKVH…KYYI. Over 161 to 169 the chain is Cytoplasmic; that stretch reads HTEDTAAKR. A helical transmembrane segment spans residues 170–192; that stretch reads IAKWYVATILVGSICWFCDRVFC. Topologically, residues 193–205 are lumenal; the sequence is KTISQWPVNPQGH. Positions 205 and 209 each coordinate Zn(2+). The chain crosses the membrane as a helical span at residues 206-226; sequence ALWHVFMSFNSYCANTFLMFC. Residues 227–255 are Cytoplasmic-facing; sequence RAQQRGWNPKVKYFLGVLPYVKIEKPKTQ.

It belongs to the alkaline ceramidase family. Zn(2+) is required as a cofactor. Mostly expressed in roots, shoot meristems and pollen, and, to a lower extent, in mature leaves.

The protein resides in the endoplasmic reticulum membrane. It is found in the golgi apparatus membrane. In terms of biological role, hydrolyzes only phytoceramide into phytosphingosine and free fatty acid. Does not have reverse activity. Affects plant morphogenesis. Required for the formation of wax layer that ensure cuticle permeability. Implicated in abscisic acid (ABA)-mediated stomatal closure. Involved in both biotic and abiotic stresses. Promotes salt resistance and defenses responses toward pathogenic bacteria (e.g. P.syringae) and against the fungal toxin fumonisin B1 (FB1). This chain is Alkaline ceramidase, found in Arabidopsis thaliana (Mouse-ear cress).